We begin with the raw amino-acid sequence, 248 residues long: Floral homeotic protein AGAMOUS (248 aa).

Positions Arg-19–Tyr-73 constitute an MADS-box domain. In terms of domain architecture, K-box spans Ala-103–Ala-193. Residues Gln-196–Gln-219 form a disordered region. The segment covering Met-202–Tyr-211 has biased composition (polar residues).

The protein resides in the nucleus. Probable transcription factor involved in regulating genes that determines stamen and carpel development in wild-type flowers. The chain is Floral homeotic protein AGAMOUS (AG1) from Nicotiana tabacum (Common tobacco).